The following is a 176-amino-acid chain: Acireductone dioxygenase (176 aa).

The Fe(2+) site is built by His-81, His-83, Glu-87, and His-126. Residues His-81, His-83, Glu-87, and His-126 each coordinate Ni(2+).

Belongs to the acireductone dioxygenase (ARD) family. Fe(2+) is required as a cofactor. Requires Ni(2+) as cofactor.

It is found in the cytoplasm. The protein resides in the nucleus. The catalysed reaction is 1,2-dihydroxy-5-(methylsulfanyl)pent-1-en-3-one + O2 = 4-methylsulfanyl-2-oxobutanoate + formate + 2 H(+). It carries out the reaction 1,2-dihydroxy-5-(methylsulfanyl)pent-1-en-3-one + O2 = 3-(methylsulfanyl)propanoate + CO + formate + 2 H(+). It participates in amino-acid biosynthesis; L-methionine biosynthesis via salvage pathway; L-methionine from S-methyl-5-thio-alpha-D-ribose 1-phosphate: step 5/6. In terms of biological role, catalyzes 2 different reactions between oxygen and the acireductone 1,2-dihydroxy-3-keto-5-methylthiopentene (DHK-MTPene) depending upon the metal bound in the active site. Fe-containing acireductone dioxygenase (Fe-ARD) produces formate and 2-keto-4-methylthiobutyrate (KMTB), the alpha-ketoacid precursor of methionine in the methionine recycle pathway. Ni-containing acireductone dioxygenase (Ni-ARD) produces methylthiopropionate, carbon monoxide and formate, and does not lie on the methionine recycle pathway. The sequence is that of Acireductone dioxygenase (adi1) from Sclerotinia sclerotiorum (strain ATCC 18683 / 1980 / Ss-1) (White mold).